Consider the following 1162-residue polypeptide: DNA-directed RNA polymerase subunit beta 1 (1162 aa).

Belongs to the RNA polymerase beta chain family. In terms of assembly, the RNAP catalytic core consists of 2 alpha, 1 beta, 1 beta' and 1 omega subunit. When a sigma factor is associated with the core the holoenzyme is formed, which can initiate transcription.

It carries out the reaction RNA(n) + a ribonucleoside 5'-triphosphate = RNA(n+1) + diphosphate. In terms of biological role, DNA-dependent RNA polymerase catalyzes the transcription of DNA into RNA using the four ribonucleoside triphosphates as substrates. This chain is DNA-directed RNA polymerase subunit beta 1, found in Nocardia farcinica (strain IFM 10152).